The following is a 416-amino-acid chain: Cyclic dinucleotide synthase CdnG (416 aa).

Serine 72 is a binding site for GTP. Catalysis depends on residues aspartate 89, aspartate 91, and aspartate 140. Residue aspartate 91 participates in GTP binding. Aspartate 91 is a Mg(2+) binding site. Positions 145 to 167 (RRRAPKEKEGEIPHAKKGTRSDP) are disordered. Over residues 150-167 (KEKEGEIPHAKKGTRSDP) the composition is skewed to basic and acidic residues. Residues lysine 236, serine 253, glutamate 305, arginine 306, and aspartate 309 each coordinate GTP.

It belongs to the CD-NTase family. G10 subfamily. Mg(2+) serves as cofactor.

The enzyme catalyses UTP + GTP = 3',3'-cGMP-UMP + 2 diphosphate. It carries out the reaction GTP + ATP = 3',3'-cGAMP + 2 diphosphate. It catalyses the reaction 2 ATP = 3',3'-c-di-AMP + 2 diphosphate. In terms of biological role, cyclic nucleotide synthase (second messenger synthase) of a CBASS antivirus system. CBASS (cyclic oligonucleotide-based antiphage signaling system) provides immunity against bacteriophage. The CD-NTase protein synthesizes cyclic nucleotides in response to infection; these serve as specific second messenger signals. The signals activate a diverse range of effectors, leading to bacterial cell death and thus abortive phage infection. A type II-short CBASS system. Cyclic dinucleotide synthase that catalyzes the synthesis of predominantly 3'3'-cGMP-UMP, followed by 3'3'-cGAMP and c-di-AMP in a reaction mixture of ATP, CTP, GTP and UTP. The cyclic nucleotide products are second messengers that activate the CBASS Cap5 effector nuclease, leading to DNA degradation and probably cell death. Cyclic nucleotides do not activate the effector equally; reactions with ATP/GTP, ATP/UTP and ATP alone activate Cap5, whereas reaction with GTP/UTP (the major in vitro product) do not. The protein is Cyclic dinucleotide synthase CdnG of Bradyrhizobium diazoefficiens (strain JCM 10833 / BCRC 13528 / IAM 13628 / NBRC 14792 / USDA 110).